The chain runs to 212 residues: Transmembrane protein 186 (212 aa).

Topologically, residues M1 to T78 are mitochondrial matrix. The chain crosses the membrane as a helical span at residues A79–F99. The Mitochondrial intermembrane segment spans residues S100–S101. A helical membrane pass occupies residues L102–F122. The Mitochondrial matrix segment spans residues F123 to K212.

This sequence belongs to the TMEM186 family. In terms of assembly, part of the mitochondrial complex I assembly/MCIA complex that comprises at least the core subunits TMEM126B, NDUFAF1, ECSIT and ACAD9 and complement subunits such as COA1 and TMEM186. Interacts with MT-ND3.

The protein resides in the mitochondrion inner membrane. Functionally, as part of the MCIA complex, required for efficient assembly of the mitochondrial complex I. This is Transmembrane protein 186 from Bos taurus (Bovine).